The following is a 2082-amino-acid chain: Probable ATP-dependent helicase PF08_0048 (2082 aa).

The HSA domain occupies Lys-66–Lys-138. Residues Asn-209–Val-221 show a composition bias toward low complexity. 2 disordered regions span residues Asn-209–Thr-234 and Asn-301–Arg-470. Composition is skewed to basic and acidic residues over residues Asn-419–Asn-448 and Thr-455–Asn-465. Positions Lys-476–Asn-531 form a coiled coil. The tract at residues Asp-532–Ile-641 is disordered. Residues Thr-536–Arg-545 show a composition bias toward basic and acidic residues. Residues Asp-579–Asp-598 are compositionally biased toward low complexity. A compositionally biased stretch (acidic residues) spans Asn-599–Asn-627. Residues Leu-674–Asn-839 enclose the Helicase ATP-binding domain. Asp-687 to Thr-694 contributes to the ATP binding site. The DEAH box motif lies at Asp-790–His-793. The segment at Glu-1199–Asn-1255 is disordered. One can recognise a Helicase C-terminal domain in the interval Ala-1772 to Asn-1922. Residues Glu-1972–Glu-2060 are a coiled coil.

This sequence belongs to the SNF2/RAD54 helicase family. SWR1 subfamily. In terms of assembly, component of a chromatin-remodeling complex.

It localises to the nucleus. Functionally, catalytic component of a chromatin remodeling complex. This chain is Probable ATP-dependent helicase PF08_0048, found in Plasmodium falciparum (isolate 3D7).